The primary structure comprises 352 residues: Anthranilate phosphoribosyltransferase (352 aa).

5-phospho-alpha-D-ribose 1-diphosphate contacts are provided by residues glycine 83, glycine 86–aspartate 87, threonine 91, asparagine 93–threonine 96, lysine 111–serine 119, and alanine 123. Residue glycine 83 coordinates anthranilate. Serine 95 is a binding site for Mg(2+). Position 169 (arginine 169) interacts with anthranilate. The Mg(2+) site is built by aspartate 228 and glutamate 229.

The protein belongs to the anthranilate phosphoribosyltransferase family. Homodimer. Mg(2+) serves as cofactor.

It catalyses the reaction N-(5-phospho-beta-D-ribosyl)anthranilate + diphosphate = 5-phospho-alpha-D-ribose 1-diphosphate + anthranilate. It participates in amino-acid biosynthesis; L-tryptophan biosynthesis; L-tryptophan from chorismate: step 2/5. Catalyzes the transfer of the phosphoribosyl group of 5-phosphorylribose-1-pyrophosphate (PRPP) to anthranilate to yield N-(5'-phosphoribosyl)-anthranilate (PRA). The sequence is that of Anthranilate phosphoribosyltransferase from Neisseria meningitidis serogroup C (strain 053442).